A 351-amino-acid chain; its full sequence is Tropomodulin-2 (351 aa).

Ser25 bears the Phosphoserine mark.

This sequence belongs to the tropomodulin family. In terms of assembly, binds to the N-terminus of tropomyosin and to actin. Binds to TMBr3 as well as to other low molecular mass tropomyosins (TM5a or TM5), but not to high molecular mass tropomyosins (TM2 or TMBr1). As to expression, neuronal-tissue specific.

It localises to the cytoplasm. The protein localises to the cytoskeleton. In terms of biological role, blocks the elongation and depolymerization of the actin filaments at the pointed end. The Tmod/TM complex contributes to the formation of the short actin protofilament, which in turn defines the geometry of the membrane skeleton. The sequence is that of Tropomodulin-2 (Tmod2) from Rattus norvegicus (Rat).